The primary structure comprises 173 residues: Superoxide dismutase [Cu-Zn] 2 (173 aa).

An N-terminal signal peptide occupies residues 1–19 (MKRLSLAMVTLLACAGAQA). Positions 67, 69, and 92 each coordinate Cu cation. Cys-74 and Cys-169 are joined by a disulfide. Zn(2+) contacts are provided by His-92, His-101, His-109, and Asp-112. His-147 serves as a coordination point for Cu cation.

It belongs to the Cu-Zn superoxide dismutase family. Monomer. The cofactor is Cu cation. Requires Zn(2+) as cofactor.

The protein localises to the periplasm. It carries out the reaction 2 superoxide + 2 H(+) = H2O2 + O2. Its function is as follows. Destroys radicals which are normally produced within the cells and which are toxic to biological systems. The protein is Superoxide dismutase [Cu-Zn] 2 (sodC) of Salmonella typhimurium (strain LT2 / SGSC1412 / ATCC 700720).